Consider the following 444-residue polypeptide: 3-isopropylmalate dehydratase large subunit (444 aa).

[4Fe-4S] cluster contacts are provided by X348, C408, and X411. The tract at residues 423–444 (ERXXSHSNRNFEGRQGRGGRTH) is disordered.

The protein belongs to the aconitase/IPM isomerase family. LeuC type 1 subfamily. As to quaternary structure, heterodimer of LeuC and LeuD. [4Fe-4S] cluster is required as a cofactor.

The enzyme catalyses (2R,3S)-3-isopropylmalate = (2S)-2-isopropylmalate. It participates in amino-acid biosynthesis; L-leucine biosynthesis; L-leucine from 3-methyl-2-oxobutanoate: step 2/4. Functionally, catalyzes the isomerization between 2-isopropylmalate and 3-isopropylmalate, via the formation of 2-isopropylmaleate. This Buchnera aphidicola subsp. Uroleucon rudbeckiae protein is 3-isopropylmalate dehydratase large subunit.